A 528-amino-acid polypeptide reads, in one-letter code: Peptide chain release factor 3 (528 aa).

The tr-type G domain maps to 11–279; sequence SRRRTFAIIS…GLVDWAPSPQ (269 aa). GTP contacts are provided by residues 20–27, 88–92, and 142–145; these read SHPDAGKT, DTPGH, and NKLD.

It belongs to the TRAFAC class translation factor GTPase superfamily. Classic translation factor GTPase family. PrfC subfamily.

The protein localises to the cytoplasm. In terms of biological role, increases the formation of ribosomal termination complexes and stimulates activities of RF-1 and RF-2. It binds guanine nucleotides and has strong preference for UGA stop codons. It may interact directly with the ribosome. The stimulation of RF-1 and RF-2 is significantly reduced by GTP and GDP, but not by GMP. This chain is Peptide chain release factor 3, found in Pseudoalteromonas atlantica (strain T6c / ATCC BAA-1087).